The primary structure comprises 500 residues: 4-aminobutyrate aminotransferase, mitochondrial (500 aa).

The transit peptide at 1–28 (MASMLLAQRLACSFQHSYRLLVPGSRHI) directs the protein to the mitochondrion. Position 163 (Cys163) interacts with [2Fe-2S] cluster. 164–165 (GS) is a binding site for pyridoxal 5'-phosphate. Cys166 contributes to the [2Fe-2S] cluster binding site. Arg220 provides a ligand contact to substrate. Lys231 carries the N6-succinyllysine modification. Lys252 is modified (N6-acetyllysine; alternate). Lys252 is modified (N6-succinyllysine; alternate). N6-acetyllysine is present on residues Lys279 and Lys318. The residue at position 357 (Lys357) is an N6-(pyridoxal phosphate)lysine. Thr381 contacts pyridoxal 5'-phosphate. Residue Lys413 is modified to N6-acetyllysine; alternate. Lys413 carries the post-translational modification N6-succinyllysine; alternate. N6-acetyllysine occurs at positions 452 and 470.

It belongs to the class-III pyridoxal-phosphate-dependent aminotransferase family. In terms of assembly, homodimer; disulfide-linked. Pyridoxal 5'-phosphate serves as cofactor. The cofactor is [2Fe-2S] cluster. In terms of tissue distribution, liver &gt; pancreas &gt; brain &gt; kidney &gt; heart &gt; placenta.

It is found in the mitochondrion matrix. It catalyses the reaction 4-aminobutanoate + 2-oxoglutarate = succinate semialdehyde + L-glutamate. The enzyme catalyses (S)-3-amino-2-methylpropanoate + 2-oxoglutarate = 2-methyl-3-oxopropanoate + L-glutamate. Its function is as follows. Catalyzes the conversion of gamma-aminobutyrate and L-beta-aminoisobutyrate to succinate semialdehyde and methylmalonate semialdehyde, respectively. Can also convert delta-aminovalerate and beta-alanine. The chain is 4-aminobutyrate aminotransferase, mitochondrial from Homo sapiens (Human).